Reading from the N-terminus, the 822-residue chain is DNA-directed RNA polymerase subunit beta N-terminal section (822 aa).

Positions 376–408 (ELTEGNPSSKSQTKNKTSASKKSKTLNVANTKG) are disordered. The segment covering 383–393 (SSKSQTKNKTS) has biased composition (low complexity).

Belongs to the RNA polymerase beta chain family. In plastids the minimal PEP RNA polymerase catalytic core is composed of four subunits: alpha, beta, beta', and beta''. When a (nuclear-encoded) sigma factor is associated with the core the holoenzyme is formed, which can initiate transcription.

Its subcellular location is the plastid. The protein localises to the chloroplast. It carries out the reaction RNA(n) + a ribonucleoside 5'-triphosphate = RNA(n+1) + diphosphate. Functionally, DNA-dependent RNA polymerase catalyzes the transcription of DNA into RNA using the four ribonucleoside triphosphates as substrates. The protein is DNA-directed RNA polymerase subunit beta N-terminal section (rpoB1) of Chlamydomonas reinhardtii (Chlamydomonas smithii).